The following is a 506-amino-acid chain: Fe(3+)-transport system permease protein FbpB 2 (506 aa).

12 helical membrane-spanning segments follow: residues 9 to 29, 57 to 77, 90 to 110, 116 to 136, 174 to 194, 218 to 238, 275 to 295, 314 to 334, 350 to 370, 379 to 399, 428 to 448, and 480 to 500; these read LTLL…YVIL, LLMV…AFLL, VAMT…WISL, VFWG…YLPV, IGSS…AVSI, ALLS…EIFF, IFIL…IVGT, FIIS…LVWA, PYLL…YFSI, TFFV…QTTL, LTLP…FLNL, and AAAT…VFLL. The ABC transmembrane type-1 1 domain occupies 52-233; it reads LSNTMLLMVC…LMAICILIVF (182 aa). An ABC transmembrane type-1 2 domain is found at 310 to 500; that stretch reads FSNSFIISGL…LFSGIPVFLL (191 aa).

Belongs to the binding-protein-dependent transport system permease family. FbpB subfamily. In terms of assembly, the complex is composed of two ATP-binding proteins (FbpC), two transmembrane proteins (FbpB) and a solute-binding protein (FbpA).

The protein resides in the cell inner membrane. Part of the ABC transporter complex FbpABC (TC 3.A.1.10.1) involved in Fe(3+) ions import. Probably responsible for the translocation of the substrate across the membrane. This chain is Fe(3+)-transport system permease protein FbpB 2 (fbpB2), found in Haemophilus influenzae (strain ATCC 51907 / DSM 11121 / KW20 / Rd).